The primary structure comprises 575 residues: NEDD4-binding protein 2-like 2 (575 aa).

Composition is skewed to basic and acidic residues over residues 69–87 (QEDK…EMPG), 129–142 (PPEK…KSET), and 149–167 (DSKR…KLEM). 2 disordered regions span residues 69-169 (QEDK…EMDT) and 555-575 (GEQR…ADDY). Residues 162–194 (SKKLEMDTELSQFYKEIEELENENEASQGSCTE) are a coiled coil. Positions 564-575 (GSHSQVSIADDY) are enriched in polar residues.

This Mus musculus (Mouse) protein is NEDD4-binding protein 2-like 2 (N4bp2l2).